A 168-amino-acid chain; its full sequence is Shikimate kinase (168 aa).

Residue 10–15 (CSGKST) coordinates ATP. S14 contacts Mg(2+). Residues D32, R56, and G78 each coordinate substrate. An ATP-binding site is contributed by R116. R133 contributes to the substrate binding site.

Belongs to the shikimate kinase family. In terms of assembly, monomer. The cofactor is Mg(2+).

It localises to the cytoplasm. The enzyme catalyses shikimate + ATP = 3-phosphoshikimate + ADP + H(+). The protein operates within metabolic intermediate biosynthesis; chorismate biosynthesis; chorismate from D-erythrose 4-phosphate and phosphoenolpyruvate: step 5/7. Its function is as follows. Catalyzes the specific phosphorylation of the 3-hydroxyl group of shikimic acid using ATP as a cosubstrate. This Aquifex aeolicus (strain VF5) protein is Shikimate kinase.